The sequence spans 98 residues: uncharacterized protein (98 aa).

Basic residues predominate over residues 1–10 (MARRRKPLHR). Residues 1–21 (MARRRKPLHRQRPEPPSWALR) form a disordered region.

This is an uncharacterized protein from Mycobacterium bovis (strain ATCC BAA-935 / AF2122/97).